Here is a 340-residue protein sequence, read N- to C-terminus: TD and POZ domain-containing protein 5 (340 aa).

The 131-residue stretch at 19–149 (EFCYVWTIRN…ENKLTLCCKV (131 aa)) folds into the MATH domain. The region spanning 188–255 (TDCCLLVAGH…IYTGKAPHLQ (68 aa)) is the BTB domain.

The protein belongs to the Tdpoz family.

This is TD and POZ domain-containing protein 5 from Mus musculus (Mouse).